A 508-amino-acid polypeptide reads, in one-letter code: Steroid 17-alpha-hydroxylase/17,20 lyase (508 aa).

Asn202 is a binding site for substrate. Cys442 is a heme binding site.

This sequence belongs to the cytochrome P450 family. Heme is required as a cofactor.

The protein resides in the endoplasmic reticulum membrane. Its subcellular location is the microsome membrane. The catalysed reaction is a C21-steroid + reduced [NADPH--hemoprotein reductase] + O2 = a 17alpha-hydroxy-C21-steroid + oxidized [NADPH--hemoprotein reductase] + H2O + H(+). It carries out the reaction progesterone + reduced [NADPH--hemoprotein reductase] + O2 = 17alpha-hydroxyprogesterone + oxidized [NADPH--hemoprotein reductase] + H2O + H(+). The enzyme catalyses pregnenolone + reduced [NADPH--hemoprotein reductase] + O2 = 17alpha-hydroxypregnenolone + oxidized [NADPH--hemoprotein reductase] + H2O + H(+). It catalyses the reaction 17alpha-hydroxyprogesterone + reduced [NADPH--hemoprotein reductase] + O2 = androst-4-ene-3,17-dione + acetate + oxidized [NADPH--hemoprotein reductase] + H2O + 2 H(+). The catalysed reaction is 17alpha-hydroxyprogesterone + reduced [NADPH--hemoprotein reductase] + O2 = 16alpha,17alpha-dihydroxyprogesterone + oxidized [NADPH--hemoprotein reductase] + H2O + H(+). It carries out the reaction 16alpha,17alpha-dihydroxyprogesterone + reduced [NADPH--hemoprotein reductase] + O2 = 6beta,16alpha,17alpha-trihydroxyprogesterone + oxidized [NADPH--hemoprotein reductase] + H2O + H(+). The enzyme catalyses 17alpha-hydroxypregnenolone + reduced [NADPH--hemoprotein reductase] + O2 = 3beta-hydroxyandrost-5-en-17-one + acetate + oxidized [NADPH--hemoprotein reductase] + H2O + 2 H(+). It catalyses the reaction 16alpha,17alpha-dihydroxypregnenolone + reduced [NADPH--hemoprotein reductase] + O2 = 3beta,16alpha-dihydroxy-androst-5-en-17-one + acetate + oxidized [NADPH--hemoprotein reductase] + H2O + 2 H(+). The catalysed reaction is 3beta-hydroxyandrost-5-en-17-one + reduced [NADPH--hemoprotein reductase] + O2 = 3beta,16alpha-dihydroxy-androst-5-en-17-one + oxidized [NADPH--hemoprotein reductase] + H2O + H(+). It carries out the reaction androst-4-ene-3,17-dione + reduced [NADPH--hemoprotein reductase] + O2 = 16alpha-hydroxyandrost-4-ene-3,17-dione + oxidized [NADPH--hemoprotein reductase] + H2O + H(+). It participates in steroid hormone biosynthesis. Its pathway is steroid biosynthesis; glucocorticoid biosynthesis. Regulated predominantly by intracellular cAMP levels. The 17,20-lyase activity is stimulated by cytochrome b5, which acts as an allosteric effector increasing the Vmax of the lyase activity. In terms of biological role, a cytochrome P450 monooxygenase involved in corticoid and androgen biosynthesis. Catalyzes 17-alpha hydroxylation of C21 steroids, which is common for both pathways. A second oxidative step, required only for androgen synthesis, involves an acyl-carbon cleavage. The 17-alpha hydroxy intermediates, as part of adrenal glucocorticoids biosynthesis pathway, are precursors of cortisol. Hydroxylates steroid hormones, pregnenolone and progesterone to form 17-alpha hydroxy metabolites, followed by the cleavage of the C17-C20 bond to form C19 steroids, dehydroepiandrosterone (DHEA) and androstenedione. Has 16-alpha hydroxylase activity. Catalyzes 16-alpha hydroxylation of 17-alpha hydroxy pregnenolone, followed by the cleavage of the C17-C20 bond to form 16-alpha-hydroxy DHEA. Also 16-alpha hydroxylates androgens, relevant for estriol synthesis. Mechanistically, uses molecular oxygen inserting one oxygen atom into a substrate, and reducing the second into a water molecule, with two electrons provided by NADPH via cytochrome P450 reductase (CPR; NADPH-ferrihemoprotein reductase). The protein is Steroid 17-alpha-hydroxylase/17,20 lyase (CYP17A1) of Pan troglodytes (Chimpanzee).